Consider the following 255-residue polypeptide: Malonyl-[acyl-carrier protein] O-methyltransferase (255 aa).

This sequence belongs to the methyltransferase superfamily.

The enzyme catalyses malonyl-[ACP] + S-adenosyl-L-methionine = malonyl-[ACP] methyl ester + S-adenosyl-L-homocysteine. The protein operates within cofactor biosynthesis; biotin biosynthesis. Functionally, converts the free carboxyl group of a malonyl-thioester to its methyl ester by transfer of a methyl group from S-adenosyl-L-methionine (SAM). It allows to synthesize pimeloyl-ACP via the fatty acid synthetic pathway. This is Malonyl-[acyl-carrier protein] O-methyltransferase from Porphyromonas gingivalis (strain ATCC BAA-308 / W83).